We begin with the raw amino-acid sequence, 337 residues long: Pyrophosphate--fructose 6-phosphate 1-phosphotransferase (337 aa).

Glycine 10 serves as a coordination point for diphosphate. Residue aspartate 101 coordinates Mg(2+). Residues threonine 124–aspartate 126, arginine 161, methionine 168–arginine 170, glutamate 220, arginine 257, and histidine 263–arginine 266 each bind substrate. Aspartate 126 (proton acceptor) is an active-site residue.

The protein belongs to the phosphofructokinase type A (PFKA) family. Mixed-substrate PFK group III subfamily. Homodimer or homotrimer. The cofactor is Mg(2+).

Its subcellular location is the cytoplasm. The catalysed reaction is beta-D-fructose 6-phosphate + diphosphate = beta-D-fructose 1,6-bisphosphate + phosphate + H(+). Its pathway is carbohydrate degradation; glycolysis; D-glyceraldehyde 3-phosphate and glycerone phosphate from D-glucose: step 3/4. Its activity is regulated as follows. Non-allosteric. Functionally, catalyzes the phosphorylation of D-fructose 6-phosphate, the first committing step of glycolysis. Uses inorganic phosphate (PPi) as phosphoryl donor instead of ATP like common ATP-dependent phosphofructokinases (ATP-PFKs), which renders the reaction reversible, and can thus function both in glycolysis and gluconeogenesis. Consistently, PPi-PFK can replace the enzymes of both the forward (ATP-PFK) and reverse (fructose-bisphosphatase (FBPase)) reactions. In Thermoproteus tenax (strain ATCC 35583 / DSM 2078 / JCM 9277 / NBRC 100435 / Kra 1), this protein is Pyrophosphate--fructose 6-phosphate 1-phosphotransferase.